Here is a 310-residue protein sequence, read N- to C-terminus: L-lactate dehydrogenase (310 aa).

NAD(+) is bound by residues V11, D32, Y62, and 76-77; that span reads GV. Residues Q79, R85, and 117 to 120 each bind substrate; that span reads NPVD. NAD(+) is bound by residues 115–117 and S140; that span reads ASN. 145–148 contacts substrate; it reads DTAR. Positions 150 and 165 each coordinate beta-D-fructose 1,6-bisphosphate. H172 (proton acceptor) is an active-site residue. Residue T227 participates in substrate binding.

This sequence belongs to the LDH/MDH superfamily. LDH family. As to quaternary structure, homotetramer.

It localises to the cytoplasm. It catalyses the reaction (S)-lactate + NAD(+) = pyruvate + NADH + H(+). It participates in fermentation; pyruvate fermentation to lactate; (S)-lactate from pyruvate: step 1/1. With respect to regulation, allosterically activated by fructose 1,6-bisphosphate (FBP). Functionally, catalyzes the conversion of lactate to pyruvate. This Allorhizobium ampelinum (strain ATCC BAA-846 / DSM 112012 / S4) (Agrobacterium vitis (strain S4)) protein is L-lactate dehydrogenase.